Consider the following 107-residue polypeptide: Ig kappa chain V-VI region SAPC 10 (107 aa).

The interval 1–23 (EIVLTQSPAITAASLGQKVTITC) is framework-1. Cys23 and Cys87 form a disulfide bridge. The segment at 24–33 (SASSSVSYMH) is complementarity-determining-1. The tract at residues 34–48 (WYQQKSGTSPKPWIY) is framework-2. A complementarity-determining-2 region spans residues 49-55 (EISKLAS). The tract at residues 56 to 87 (GVPARFSGSGSGTSYSLTISSMEAEDAAIYYC) is framework-3. Residues 88–96 (QQWNYPLIT) are complementarity-determining-3. The interval 97–106 (FGGGTKLEIK) is framework-4.

This is Ig kappa chain V-VI region SAPC 10 from Mus musculus (Mouse).